The primary structure comprises 235 residues: 5'-methylthioadenosine/S-adenosylhomocysteine nucleosidase (235 aa).

The active-site Proton acceptor is the Glu-12. Residues Gly-78, Ile-152, and 173-174 (ME) each bind substrate. The active-site Proton donor is the Asp-197.

Belongs to the PNP/UDP phosphorylase family. MtnN subfamily. As to quaternary structure, homodimer.

It carries out the reaction S-adenosyl-L-homocysteine + H2O = S-(5-deoxy-D-ribos-5-yl)-L-homocysteine + adenine. It catalyses the reaction S-methyl-5'-thioadenosine + H2O = 5-(methylsulfanyl)-D-ribose + adenine. The enzyme catalyses 5'-deoxyadenosine + H2O = 5-deoxy-D-ribose + adenine. It participates in amino-acid biosynthesis; L-methionine biosynthesis via salvage pathway; S-methyl-5-thio-alpha-D-ribose 1-phosphate from S-methyl-5'-thioadenosine (hydrolase route): step 1/2. Functionally, catalyzes the irreversible cleavage of the glycosidic bond in both 5'-methylthioadenosine (MTA) and S-adenosylhomocysteine (SAH/AdoHcy) to adenine and the corresponding thioribose, 5'-methylthioribose and S-ribosylhomocysteine, respectively. Also cleaves 5'-deoxyadenosine, a toxic by-product of radical S-adenosylmethionine (SAM) enzymes, into 5-deoxyribose and adenine. Thus, is required for in vivo function of the radical SAM enzymes biotin synthase and lipoic acid synthase, that are inhibited by 5'-deoxyadenosine accumulation. The chain is 5'-methylthioadenosine/S-adenosylhomocysteine nucleosidase from Proteus mirabilis (strain HI4320).